The following is a 560-amino-acid chain: Proteasome-associated ATPase (560 aa).

Positions Met-1–Ala-19 are enriched in basic and acidic residues. The disordered stretch occupies residues Met-1–Gln-21. Positions Arg-16 to Lys-55 form a coiled coil. Gly-237–Leu-242 is an ATP binding site. The tract at residues Tyr-559–Leu-560 is docks into pockets in the proteasome alpha-ring.

This sequence belongs to the AAA ATPase family. In terms of assembly, homohexamer. Assembles into a hexameric ring structure that caps the 20S proteasome core. Strongly interacts with the prokaryotic ubiquitin-like protein Pup through a hydrophobic interface; the interacting region of ARC lies in its N-terminal coiled-coil domain. There is one Pup binding site per ARC hexamer ring. Upon ATP-binding, the C-terminus of ARC interacts with the alpha-rings of the proteasome core, possibly by binding to the intersubunit pockets.

Its pathway is protein degradation; proteasomal Pup-dependent pathway. ATPase which is responsible for recognizing, binding, unfolding and translocation of pupylated proteins into the bacterial 20S proteasome core particle. May be essential for opening the gate of the 20S proteasome via an interaction with its C-terminus, thereby allowing substrate entry and access to the site of proteolysis. Thus, the C-termini of the proteasomal ATPase may function like a 'key in a lock' to induce gate opening and therefore regulate proteolysis. The polypeptide is Proteasome-associated ATPase (Beutenbergia cavernae (strain ATCC BAA-8 / DSM 12333 / CCUG 43141 / JCM 11478 / NBRC 16432 / NCIMB 13614 / HKI 0122)).